We begin with the raw amino-acid sequence, 565 residues long: Phosphatidylinositol 4-kinase gamma 4 (565 aa).

Ubiquitin-like domains follow at residues 32–104 and 109–187; these read IVIF…LVVR and RAIS…RPAK. Residues 257–542 form the PI3K/PI4K catalytic domain; the sequence is GYLPVMSTEG…AILPGTSEET (286 aa). Positions 263–269 are G-loop; it reads STEGSGG. Residues 264 to 270 and K286 contribute to the ATP site; that span reads TEGSGGV. Residues 291-311 form a disordered region; sequence EPMAKNNPRGLPLSTDGEGLK. ATP is bound at residue 369–372; it reads QLFV. Positions 402-410 are catalytic loop; the sequence is ANADRHAGN. An activation loop region spans residues 425 to 451; the sequence is PIDHGYCLPEKFEDCTFEWLYWPQARE. D427 is an ATP binding site.

Belongs to the PI3/PI4-kinase family. Type II PI4K subfamily. In terms of assembly, interacts with FTIP1 and RPN10. As to expression, specifically expressed in the phloem including companion cells.

The protein localises to the nucleus. The protein resides in the endoplasmic reticulum. It carries out the reaction a 1,2-diacyl-sn-glycero-3-phospho-(1D-myo-inositol) + ATP = a 1,2-diacyl-sn-glycero-3-phospho-(1D-myo-inositol 4-phosphate) + ADP + H(+). In terms of biological role, the phosphorylation of phosphatidylinositol (PI) to PI4P is the first committed step in the generation of phosphatidylinositol 4,5-bisphosphate (PIP2), a precursor of the second messenger inositol 1,4,5-trisphosphate (InsP3). Involved in the control of flowering under long day conditions by promoting degradation of FTIP1. Recruits FTIP1 for degradation by the 26S proteasome in leaves, which affects RFT1 transport to the shoot apical meristem (SAM). This chain is Phosphatidylinositol 4-kinase gamma 4, found in Oryza sativa subsp. japonica (Rice).